Reading from the N-terminus, the 38-residue chain is CHH precursor-related peptide (38 aa).

The disordered stretch occupies residues 18–38 (GALEPSTPLGDLSGSLGHPVE).

As to expression, produced by the medulla terminalis X-organ in the eyestalks and transported to the sinus gland where it is stored and released.

It localises to the secreted. This is CHH precursor-related peptide from Cancer pagurus (Rock crab).